The primary structure comprises 202 residues: NADH-ubiquinone oxidoreductase chain 6 (202 aa).

Transmembrane regions (helical) follow at residues 1–21 (MVTM…IMVI), 29–49 (SVFW…LLGV), 52–72 (IALM…LFVI), 96–116 (VPIG…SWLI), and 156–176 (YYLF…AIVL).

It belongs to the complex I subunit 6 family.

Its subcellular location is the mitochondrion membrane. The catalysed reaction is a ubiquinone + NADH + 5 H(+)(in) = a ubiquinol + NAD(+) + 4 H(+)(out). Its function is as follows. Core subunit of the mitochondrial membrane respiratory chain NADH dehydrogenase (Complex I) that is believed to belong to the minimal assembly required for catalysis. Complex I functions in the transfer of electrons from NADH to the respiratory chain. The immediate electron acceptor for the enzyme is believed to be ubiquinone. In Metridium senile (Brown sea anemone), this protein is NADH-ubiquinone oxidoreductase chain 6 (ND6).